The chain runs to 246 residues: Mast cell protease-like protein (246 aa).

The first 18 residues, 1–18, serve as a signal peptide directing secretion; the sequence is MQALLFLMALLLPSGAGA. A propeptide spans 19 to 20 (activation peptide); sequence EE. Residues 21–244 enclose the Peptidase S1 domain; sequence IIGGVESEPH…HVPWINRVIK (224 aa). The cysteines at positions 50 and 66 are disulfide-linked. Catalysis depends on charge relay system residues His-65 and Asp-109. Intrachain disulfides connect Cys-143–Cys-208 and Cys-174–Cys-187. The active-site Charge relay system is Ser-202.

It belongs to the peptidase S1 family. Granzyme subfamily.

The protein is Mast cell protease-like protein (Mcptl) of Mus musculus (Mouse).